Here is a 122-residue protein sequence, read N- to C-terminus: Conotoxin flf14c (122 aa).

The N-terminal stretch at 1–22 is a signal peptide; that stretch reads MGFRVLVLIVMVTTSALPFTFS. The propeptide occupies 23–96; that stretch reads EESGRSPFRP…AESPVGQKRW (74 aa). Positions 53–89 are disordered; that stretch reads RADGQTPDMHQPEMRRPEMRRPEVRRPEVRQPEFAES. The segment covering 62-85 has biased composition (basic and acidic residues); that stretch reads HQPEMRRPEMRRPEVRRPEVRQPE. Cystine bridges form between cysteine 101/cysteine 121 and cysteine 105/cysteine 117.

As to expression, expressed by the venom duct.

The protein localises to the secreted. This chain is Conotoxin flf14c, found in Conus anabathrum floridanus (Florida cone).